A 205-amino-acid polypeptide reads, in one-letter code: Putative 3-methyladenine DNA glycosylase (205 aa).

The protein belongs to the DNA glycosylase MPG family.

This chain is Putative 3-methyladenine DNA glycosylase, found in Bacillus cereus (strain AH187).